A 215-amino-acid polypeptide reads, in one-letter code: Ras-related protein Rab-14 (215 aa).

At A2 the chain carries N-acetylalanine. Residues G21, V22, G23, K24, S25, C26, A38, D39, C40, H42, and T43 each coordinate GTP. S25 contacts Mg(2+). The Switch 1 motif lies at 42-47; it reads HTIGVE. The Mg(2+) site is built by T43 and D66. Residues 68 to 77 carry the Switch 2 motif; that stretch reads AGQERFRAVT. Positions 69, 124, 125, 127, 155, and 156 each coordinate GTP. The disordered stretch occupies residues 188–215; sequence SGVQHKPSAPQGGRLTSEPQPQREGCGC. Residues C213 and C215 are each lipidated (S-geranylgeranyl cysteine). At C215 the chain carries Cysteine methyl ester.

This sequence belongs to the small GTPase superfamily. Rab family. As to quaternary structure, interacts with ZFYVE20. Interacts with KIF16B. Interacts (GTP-bound form) with RUFY1; the interaction recruits RUFY1 onto endosomal membranes. Interacts (GTP-bound form) with RAB11FIP1 (via its C-terminus); the interactions doesn't mediate RAB11FIP1 rectruitment to membranes. Interacts with RAB11FIP2. Requires Mg(2+) as cofactor.

It is found in the recycling endosome. The protein resides in the early endosome membrane. The protein localises to the golgi apparatus membrane. It localises to the golgi apparatus. Its subcellular location is the trans-Golgi network membrane. It is found in the cytoplasmic vesicle. The protein resides in the phagosome. The catalysed reaction is GTP + H2O = GDP + phosphate + H(+). With respect to regulation, regulated by guanine nucleotide exchange factors (GEFs) including DENND6A and DENND6B which promote the exchange of bound GDP for free GTP. Regulated by GTPase activating proteins (GAPs) which increase the GTP hydrolysis activity. Inhibited by GDP dissociation inhibitors (GDIs) which prevent Rab-GDP dissociation. Functionally, the small GTPases Rab are key regulators of intracellular membrane trafficking, from the formation of transport vesicles to their fusion with membranes. Rabs cycle between an inactive GDP-bound form and an active GTP-bound form that is able to recruit to membranes different set of downstream effectors directly responsible for vesicle formation, movement, tethering and fusion. Involved in membrane trafficking between the Golgi complex and endosomes during early embryonic development. Regulates the Golgi to endosome transport of FGFR-containing vesicles during early development, a key process for developing basement membrane and epiblast and primitive endoderm lineages during early postimplantation development. May act by modulating the kinesin KIF16B-cargo association to endosomes. Regulates, together with its guanine nucleotide exchange factor DENND6A, the specific endocytic transport of ADAM10, N-cadherin/CDH2 shedding and cell-cell adhesion. Mediates endosomal tethering and fusion through the interaction with RUFY1 and RAB4B. Interaction with RAB11FIP1 may function in the process of neurite formation. This Sus scrofa (Pig) protein is Ras-related protein Rab-14 (RAB14).